A 778-amino-acid chain; its full sequence is Exo-beta-D-glucosaminidase (778 aa).

Substrate is bound by residues Tyr-55, 104–105, 180–181, Glu-308, Glu-349, and Tyr-381; these read GE and DE. Catalysis depends on Glu-181, which acts as the Proton donor. Glu-349 functions as the Nucleophile in the catalytic mechanism.

This sequence belongs to the glycosyl hydrolase 35 family. Homodimer.

Its subcellular location is the cytoplasm. It carries out the reaction beta-D-glucosaminyl-(1-&gt;4)-N-acetyl-D-glucosamine + H2O = D-glucosamine + N-acetyl-D-glucosamine. It participates in glycan degradation; chitin degradation. Functionally, exo-type enzyme that specifically cleaves the non-reducing terminal glycosidic bond of chitooligosaccharides. Catalyzes the hydrolysis of GlcN-GlcNAc to glucosamine (GlcN) and N-acetylglucosamine (GlcNAc). Involved in chitin degradation. Can also hydrolyze chitosan and chitooligosaccharides of various chain lengths. The sequence is that of Exo-beta-D-glucosaminidase from Pyrococcus horikoshii (strain ATCC 700860 / DSM 12428 / JCM 9974 / NBRC 100139 / OT-3).